A 327-amino-acid polypeptide reads, in one-letter code: Fructose-1,6-bisphosphatase class 1 (327 aa).

Mg(2+) contacts are provided by Glu-84, Asp-103, Leu-105, and Asp-106. Substrate-binding positions include 106–109, Asn-197, and Lys-263; that span reads DGSS. Glu-269 is a binding site for Mg(2+).

Belongs to the FBPase class 1 family. As to quaternary structure, homotetramer. Mg(2+) serves as cofactor.

The protein localises to the cytoplasm. It catalyses the reaction beta-D-fructose 1,6-bisphosphate + H2O = beta-D-fructose 6-phosphate + phosphate. The protein operates within carbohydrate biosynthesis; gluconeogenesis. The chain is Fructose-1,6-bisphosphatase class 1 from Idiomarina loihiensis (strain ATCC BAA-735 / DSM 15497 / L2-TR).